We begin with the raw amino-acid sequence, 734 residues long: Photosystem I P700 chlorophyll a apoprotein A2 (734 aa).

The next 8 helical transmembrane spans lie at 46 to 69 (IFAS…FHVA), 135 to 158 (LYTG…LHLQ), 175 to 199 (LNHH…HVAI), 273 to 291 (IAHH…GHMY), 330 to 353 (IHFQ…QHMY), 369 to 395 (AALY…IFFI), 417 to 439 (AIIS…LYVH), and 517 to 535 (FLVH…LILV). Residues Cys-559 and Cys-568 each contribute to the [4Fe-4S] cluster site. A run of 2 helical transmembrane segments spans residues 575–596 (AFYL…YWHW) and 643–665 (LSVW…MFLI). The chlorophyll a site is built by His-654, Met-662, and Tyr-670. Trp-671 serves as a coordination point for phylloquinone. The helical transmembrane segment at 707–727 (LVGLAHFSVGYIFTYAAFLIA) threads the bilayer.

This sequence belongs to the PsaA/PsaB family. The PsaA/B heterodimer binds the P700 chlorophyll special pair and subsequent electron acceptors. PSI consists of a core antenna complex that captures photons, and an electron transfer chain that converts photonic excitation into a charge separation. The eukaryotic PSI reaction center is composed of at least 11 subunits. P700 is a chlorophyll a/chlorophyll a' dimer, A0 is one or more chlorophyll a, A1 is one or both phylloquinones and FX is a shared 4Fe-4S iron-sulfur center. is required as a cofactor.

It localises to the plastid. The protein resides in the chloroplast thylakoid membrane. It carries out the reaction reduced [plastocyanin] + hnu + oxidized [2Fe-2S]-[ferredoxin] = oxidized [plastocyanin] + reduced [2Fe-2S]-[ferredoxin]. Functionally, psaA and PsaB bind P700, the primary electron donor of photosystem I (PSI), as well as the electron acceptors A0, A1 and FX. PSI is a plastocyanin-ferredoxin oxidoreductase, converting photonic excitation into a charge separation, which transfers an electron from the donor P700 chlorophyll pair to the spectroscopically characterized acceptors A0, A1, FX, FA and FB in turn. Oxidized P700 is reduced on the lumenal side of the thylakoid membrane by plastocyanin. The protein is Photosystem I P700 chlorophyll a apoprotein A2 of Gossypium hirsutum (Upland cotton).